The following is a 255-amino-acid chain: Small ribosomal subunit protein uS10m (255 aa).

The N-terminal 32 residues, 1-32, are a transit peptide targeting the mitochondrion; sequence MALPAARSALSARAFIRPAAALNAAASSSRYL. 2 disordered regions span residues 30 to 52 and 220 to 255; these read RYLS…NSET and SEGE…AKSS. The segment covering 236-255 has biased composition (basic and acidic residues); the sequence is DAAREEKPAEKLKEEEAKSS.

This sequence belongs to the universal ribosomal protein uS10 family. As to quaternary structure, part of the mitochondrial small ribosomal subunit.

The protein resides in the mitochondrion. Functionally, involved in mitochondrial genome encoded proteins translation. Involved in the binding of tRNA to the ribosomes. The chain is Small ribosomal subunit protein uS10m (RSM10) from Cryptococcus neoformans var. neoformans serotype D (strain B-3501A) (Filobasidiella neoformans).